Reading from the N-terminus, the 187-residue chain is UPF0301 protein VP2612 (187 aa).

This sequence belongs to the UPF0301 (AlgH) family.

This Vibrio parahaemolyticus serotype O3:K6 (strain RIMD 2210633) protein is UPF0301 protein VP2612.